An 83-amino-acid chain; its full sequence is Small ribosomal subunit protein bS16 (83 aa).

This sequence belongs to the bacterial ribosomal protein bS16 family.

The polypeptide is Small ribosomal subunit protein bS16 (Pseudomonas fluorescens (strain SBW25)).